We begin with the raw amino-acid sequence, 253 residues long: Large ribosomal subunit protein uL4 (253 aa).

Residues 78-107 (SRAARVPHAKGGRRAHPPKPEADRSEKVNT) form a disordered region. A compositionally biased stretch (basic residues) spans 82–94 (RVPHAKGGRRAHP). The segment covering 95 to 107 (PKPEADRSEKVNT) has biased composition (basic and acidic residues).

The protein belongs to the universal ribosomal protein uL4 family. As to quaternary structure, part of the 50S ribosomal subunit.

One of the primary rRNA binding proteins, this protein initially binds near the 5'-end of the 23S rRNA. It is important during the early stages of 50S assembly. It makes multiple contacts with different domains of the 23S rRNA in the assembled 50S subunit and ribosome. Functionally, forms part of the polypeptide exit tunnel. The chain is Large ribosomal subunit protein uL4 from Methanosarcina acetivorans (strain ATCC 35395 / DSM 2834 / JCM 12185 / C2A).